The following is a 196-amino-acid chain: Peroxiredoxin TSA2 (196 aa).

The Thioredoxin domain occupies 3–161 (AEVQKQAPPF…ALRLVEGFQW (159 aa)). Residue lysine 14 forms a Glycyl lysine isopeptide (Lys-Gly) (interchain with G-Cter in ubiquitin) linkage. Cysteine 48 acts as the Cysteine sulfenic acid (-SOH) intermediate in catalysis. Residues lysine 89 and lysine 132 each participate in a glycyl lysine isopeptide (Lys-Gly) (interchain with G-Cter in ubiquitin) cross-link. Threonine 174 carries the post-translational modification Phosphothreonine.

The protein belongs to the peroxiredoxin family. AhpC/Prx1 subfamily. In terms of assembly, homodimer; disulfide-linked, upon oxidation.

Its subcellular location is the cytoplasm. It carries out the reaction a hydroperoxide + [thioredoxin]-dithiol = an alcohol + [thioredoxin]-disulfide + H2O. In terms of biological role, thiol-specific peroxidase that catalyzes the reduction of hydrogen peroxide and organic hydroperoxides to water and alcohols, respectively. Plays a role in cell protection against oxidative stress by detoxifying peroxides and as sensor of hydrogen peroxide-mediated signaling events. Can act alternatively as peroxidase and molecular chaperone. Oxidative stress and heat shock exposure cause a reversible shift of the protein structure from low MW species to high MW complexes, triggering a peroxidase-to-chaperone functional switch. The chaperone function of the protein enhances resistance to heat shock. The sequence is that of Peroxiredoxin TSA2 from Saccharomyces cerevisiae (strain ATCC 204508 / S288c) (Baker's yeast).